A 163-amino-acid polypeptide reads, in one-letter code: Sperm acrosome membrane-associated protein 3 (163 aa).

The N-terminal stretch at 1 to 35 (MEAGSWAPRRWPRPPGIVLLALASVLSSLLSSGQA) is a signal peptide. The 128-residue stretch at 36–163 (RVYSRCELAR…LSDWVDGCEL (128 aa)) folds into the C-type lysozyme domain. 4 disulfide bridges follow: cysteine 41–cysteine 161, cysteine 65–cysteine 149, cysteine 99–cysteine 114, and cysteine 110–cysteine 128.

This sequence belongs to the glycosyl hydrolase 22 family. As to quaternary structure, interacts with ASTL.

Its subcellular location is the secreted. Functionally, sperm surface membrane protein that may be involved in sperm-egg plasma membrane adhesion and fusion during fertilization. It could be a potential receptor for the egg oligosaccharide residue N-acetylglucosamine, which is present in the extracellular matrix over the egg plasma membrane. The processed form has no detectable bacteriolytic activity in vitro. In Bos taurus (Bovine), this protein is Sperm acrosome membrane-associated protein 3 (SPACA3).